Consider the following 154-residue polypeptide: Large ribosomal subunit protein uL13 (154 aa).

Belongs to the universal ribosomal protein uL13 family. As to quaternary structure, part of the 50S ribosomal subunit.

Its function is as follows. This protein is one of the early assembly proteins of the 50S ribosomal subunit, although it is not seen to bind rRNA by itself. It is important during the early stages of 50S assembly. The protein is Large ribosomal subunit protein uL13 of Rhodopseudomonas palustris (strain BisB5).